We begin with the raw amino-acid sequence, 689 residues long: Transcription termination factor Rho (689 aa).

Residues 1–20 (MPRTPKNQNLEQNTQTQSLT) are compositionally biased toward polar residues. Disordered regions lie at residues 1–90 (MPRT…KQPV) and 151–213 (AQAQ…NRNN). Basic residues predominate over residues 52 to 65 (PKRRGRKPNPKTKA). Low complexity-rich tracts occupy residues 170-183 (NAQQQGEAQAQNGE) and 191-213 (NNQNGKFNKFNKNNKFNKNNRNN). The region spanning 287 to 362 (IIYTEGVLEV…RRIDRVNFEE (76 aa)) is the Rho RNA-BD domain. ATP-binding positions include 405-410 (GKGQRS), 417-422 (RTGKTV), and arginine 448.

Belongs to the Rho family. Homohexamer. The homohexamer assembles into an open ring structure.

In terms of biological role, facilitates transcription termination by a mechanism that involves Rho binding to the nascent RNA, activation of Rho's RNA-dependent ATPase activity, and release of the mRNA from the DNA template. The sequence is that of Transcription termination factor Rho from Fibrobacter succinogenes (strain ATCC 19169 / S85).